Consider the following 438-residue polypeptide: Ribosomal protein uS12 methylthiotransferase RimO (438 aa).

Positions 4 to 120 (HSLFLLSLGC…ILASLGARYR (117 aa)) constitute an MTTase N-terminal domain. Cysteine 13, cysteine 49, cysteine 83, cysteine 144, cysteine 148, and cysteine 151 together coordinate [4Fe-4S] cluster. Residues 130–359 (LTPSHYAYLK…MELQEAVAES (230 aa)) enclose the Radical SAM core domain. The TRAM domain occupies 362 to 429 (REFEGKEIEV…AHELYGEIVQ (68 aa)).

The protein belongs to the methylthiotransferase family. RimO subfamily. Requires [4Fe-4S] cluster as cofactor.

It localises to the cytoplasm. The catalysed reaction is L-aspartate(89)-[ribosomal protein uS12]-hydrogen + (sulfur carrier)-SH + AH2 + 2 S-adenosyl-L-methionine = 3-methylsulfanyl-L-aspartate(89)-[ribosomal protein uS12]-hydrogen + (sulfur carrier)-H + 5'-deoxyadenosine + L-methionine + A + S-adenosyl-L-homocysteine + 2 H(+). Its function is as follows. Catalyzes the methylthiolation of an aspartic acid residue of ribosomal protein uS12. In Chlorobium chlorochromatii (strain CaD3), this protein is Ribosomal protein uS12 methylthiotransferase RimO.